The following is a 500-amino-acid chain: Cholesterol 24-hydroxylase (500 aa).

Residues 3 to 23 (PGLLLLGSAVLLAFGLCCTFV) form a helical membrane-spanning segment. A heme-binding site is contributed by cysteine 437.

This sequence belongs to the cytochrome P450 family. It depends on heme as a cofactor. In terms of tissue distribution, expressed in high level in the pyramidal cells of the hippocampus, Purkinje cells of the cerebellum, and neuronal cell bodies in layers II/III, V, and VI of the cortex. Expressed in hippocampal and cerebellar interneurons, in retinal ganglion cells, and in a subset of retinal cells localized to the inner nuclear layer (at protein level).

The protein localises to the endoplasmic reticulum membrane. The protein resides in the microsome membrane. It localises to the postsynapse. It is found in the presynapse. Its subcellular location is the cell projection. The protein localises to the dendrite. It catalyses the reaction cholesterol + reduced [NADPH--hemoprotein reductase] + O2 = (24S)-hydroxycholesterol + oxidized [NADPH--hemoprotein reductase] + H2O + H(+). The enzyme catalyses cholestanol + reduced [NADPH--hemoprotein reductase] + O2 = (24S)-hydroxycholestanol + oxidized [NADPH--hemoprotein reductase] + H2O + H(+). It carries out the reaction 7-dehydrocholesterol + reduced [NADPH--hemoprotein reductase] + O2 = cholesta-5,7-dien-3beta,24S-diol + oxidized [NADPH--hemoprotein reductase] + H2O + H(+). The catalysed reaction is 7-dehydrocholesterol + reduced [NADPH--hemoprotein reductase] + O2 = cholesta-5,7-dien-3beta,25-diol + oxidized [NADPH--hemoprotein reductase] + H2O + H(+). It catalyses the reaction desmosterol + reduced [NADPH--hemoprotein reductase] + O2 = (24Z),26-hydroxydesmosterol + oxidized [NADPH--hemoprotein reductase] + H2O + H(+). The enzyme catalyses desmosterol + reduced [NADPH--hemoprotein reductase] + O2 = (24S)-25-epoxycholesterol + oxidized [NADPH--hemoprotein reductase] + H2O + H(+). It carries out the reaction 4beta-hydroxycholesterol + reduced [NADPH--hemoprotein reductase] + O2 = 4beta,24S-dihydroxycholesterol + oxidized [NADPH--hemoprotein reductase] + H2O + H(+). The catalysed reaction is (24S)-hydroxycholesterol + reduced [NADPH--hemoprotein reductase] + O2 = (24S,25R)-24,26-dihydroxycholesterol + oxidized [NADPH--hemoprotein reductase] + H2O + H(+). It catalyses the reaction (24S)-hydroxycholesterol + reduced [NADPH--hemoprotein reductase] + O2 = 24S,25-dihydroxycholesterol + oxidized [NADPH--hemoprotein reductase] + H2O + H(+). The enzyme catalyses 7alpha-hydroxycholesterol + reduced [NADPH--hemoprotein reductase] + O2 = (24S)-7alpha-dihydroxycholesterol + oxidized [NADPH--hemoprotein reductase] + H2O + H(+). It carries out the reaction progesterone + reduced [NADPH--hemoprotein reductase] + O2 = 17alpha-hydroxyprogesterone + oxidized [NADPH--hemoprotein reductase] + H2O + H(+). The catalysed reaction is testosterone + reduced [NADPH--hemoprotein reductase] + O2 = 16beta,17beta-dihydroxyandrost-4-en-3-one + oxidized [NADPH--hemoprotein reductase] + H2O + H(+). It catalyses the reaction testosterone + reduced [NADPH--hemoprotein reductase] + O2 = 2-hydroxytestosterone + oxidized [NADPH--hemoprotein reductase] + H2O + H(+). The enzyme catalyses testosterone + reduced [NADPH--hemoprotein reductase] + O2 = 6beta,17beta-dihydroxyandrost-4-en-3-one + oxidized [NADPH--hemoprotein reductase] + H2O + H(+). Its pathway is steroid metabolism; cholesterol degradation. It participates in lipid metabolism; C21-steroid hormone metabolism. In terms of biological role, P450 monooxygenase that plays a major role in cholesterol homeostasis in the brain. Primarily catalyzes the hydroxylation (with S stereochemistry) at C-24 of cholesterol side chain, triggering cholesterol diffusion out of neurons and its further degradation. By promoting constant cholesterol elimination in neurons, may activate the mevalonate pathway and coordinate the synthesis of new cholesterol and nonsterol isoprenoids involved in synaptic activity and learning. Further hydroxylates cholesterol derivatives and hormone steroids on both the ring and side chain of these molecules, converting them into active oxysterols involved in lipid signaling and biosynthesis. Acts as an epoxidase converting cholesta-5,24-dien-3beta-ol/desmosterol into (24S),25-epoxycholesterol, an abundant lipid ligand of nuclear NR1H2 and NR1H3 receptors shown to promote neurogenesis in developing brain. May also catalyze the oxidative metabolism of xenobiotics, such as clotrimazole. The protein is Cholesterol 24-hydroxylase of Mus musculus (Mouse).